Consider the following 178-residue polypeptide: V-type proton ATPase subunit c''2 (178 aa).

At 1-24 (MSGVAIHASSWGAALVRISPYTFS) the chain is on the lumenal side. A helical transmembrane segment spans residues 25–45 (AIGIAISIGVSVLGAAWGIYI). Topologically, residues 46 to 64 (TGSSLIGAAIEAPRITSKN) are cytoplasmic. A helical transmembrane segment spans residues 65 to 85 (LISVIFCEAVAIYGVIVAIIL). The Lumenal portion of the chain corresponds to 86–108 (QTKLESVPSSKMYDAESLRAGYA). A helical membrane pass occupies residues 109–129 (IFASGIIVGFANLVCGLCVGI). Over 130–147 (IGSSCALSDAQNSTLFVK) the chain is Cytoplasmic. A helical membrane pass occupies residues 148 to 168 (ILVIEIFGSALGLFGVIVGII). Topologically, residues 169-178 (MSAQATWPTK) are lumenal.

It belongs to the V-ATPase proteolipid subunit family. In terms of assembly, V-ATPase is a heteromultimeric enzyme composed of a peripheral catalytic V1 complex (components A to H) attached to an integral membrane V0 proton pore complex (components: a, c, c'', d and e). The proteolipid components c and c'' are present as a hexameric ring that forms the proton-conducting pore. Interacts with APD2.

The protein resides in the endoplasmic reticulum membrane. Its subcellular location is the golgi apparatus membrane. Proton-conducting pore forming subunit of the membrane integral V0 complex of vacuolar ATPase. V-ATPase is responsible for acidifying a variety of intracellular compartments in eukaryotic cells. In Arabidopsis thaliana (Mouse-ear cress), this protein is V-type proton ATPase subunit c''2 (VHA-c''2).